The sequence spans 209 residues: Pyridoxine/pyridoxamine 5'-phosphate oxidase (209 aa).

Residues 7–10 and Lys-64 contribute to the substrate site; that span reads RADY. FMN contacts are provided by residues 59–64, 74–75, and Lys-81; these read RIVLLK and FT. Residues Tyr-121, Arg-125, and Ser-129 each contribute to the substrate site. Residues 138 to 139, Trp-182, and Arg-192 each bind FMN; that span reads QS.

Belongs to the pyridoxamine 5'-phosphate oxidase family. In terms of assembly, homodimer. FMN serves as cofactor.

The catalysed reaction is pyridoxamine 5'-phosphate + O2 + H2O = pyridoxal 5'-phosphate + H2O2 + NH4(+). It carries out the reaction pyridoxine 5'-phosphate + O2 = pyridoxal 5'-phosphate + H2O2. It participates in cofactor metabolism; pyridoxal 5'-phosphate salvage; pyridoxal 5'-phosphate from pyridoxamine 5'-phosphate: step 1/1. The protein operates within cofactor metabolism; pyridoxal 5'-phosphate salvage; pyridoxal 5'-phosphate from pyridoxine 5'-phosphate: step 1/1. Its function is as follows. Catalyzes the oxidation of either pyridoxine 5'-phosphate (PNP) or pyridoxamine 5'-phosphate (PMP) into pyridoxal 5'-phosphate (PLP). In Haemophilus ducreyi (strain 35000HP / ATCC 700724), this protein is Pyridoxine/pyridoxamine 5'-phosphate oxidase.